Consider the following 234-residue polypeptide: 7-carboxy-7-deazaguanine synthase (234 aa).

Residues 36–38 and Arg-51 each bind substrate; that span reads IQG. The 193-residue stretch at 42 to 234 folds into the Radical SAM core domain; the sequence is FVGYPSIFIR…LQTHKFLGIE (193 aa). 3 residues coordinate [4Fe-4S] cluster: Cys-55, Cys-59, and Cys-62. Mg(2+) is bound at residue Thr-64. Thr-100 is a substrate binding site. Residues Gly-102, 144–146, and 195–198 each bind S-adenosyl-L-methionine; these read SPK and QSMD.

It belongs to the radical SAM superfamily. 7-carboxy-7-deazaguanine synthase family. Homodimer. It depends on [4Fe-4S] cluster as a cofactor. The cofactor is S-adenosyl-L-methionine. Mg(2+) serves as cofactor.

The catalysed reaction is 6-carboxy-5,6,7,8-tetrahydropterin + H(+) = 7-carboxy-7-deazaguanine + NH4(+). The protein operates within purine metabolism; 7-cyano-7-deazaguanine biosynthesis. Its function is as follows. Catalyzes the complex heterocyclic radical-mediated conversion of 6-carboxy-5,6,7,8-tetrahydropterin (CPH4) to 7-carboxy-7-deazaguanine (CDG), a step common to the biosynthetic pathways of all 7-deazapurine-containing compounds. This is 7-carboxy-7-deazaguanine synthase from Rickettsia prowazekii (strain Madrid E).